Reading from the N-terminus, the 132-residue chain is Small ribosomal subunit protein uS11 (132 aa).

This sequence belongs to the universal ribosomal protein uS11 family. Part of the 30S ribosomal subunit. Interacts with proteins S7 and S18. Binds to IF-3.

In terms of biological role, located on the platform of the 30S subunit, it bridges several disparate RNA helices of the 16S rRNA. Forms part of the Shine-Dalgarno cleft in the 70S ribosome. This is Small ribosomal subunit protein uS11 from Dichelobacter nodosus (strain VCS1703A).